The following is a 534-amino-acid chain: 2,3-bisphosphoglycerate-independent phosphoglycerate mutase (534 aa).

Mn(2+) is bound by residues D15 and S65. S65 acts as the Phosphoserine intermediate in catalysis. Substrate-binding positions include H126, R156–D157, R188, R194, R260–R263, and K333. The Mn(2+) site is built by D400, H404, D441, H442, and H459.

Belongs to the BPG-independent phosphoglycerate mutase family. Monomer. Mn(2+) is required as a cofactor.

The catalysed reaction is (2R)-2-phosphoglycerate = (2R)-3-phosphoglycerate. The protein operates within carbohydrate degradation; glycolysis; pyruvate from D-glyceraldehyde 3-phosphate: step 3/5. Functionally, catalyzes the interconversion of 2-phosphoglycerate and 3-phosphoglycerate. The protein is 2,3-bisphosphoglycerate-independent phosphoglycerate mutase of Acaryochloris marina (strain MBIC 11017).